The following is a 211-amino-acid chain: Probable nicotinate-nucleotide adenylyltransferase (211 aa).

The protein belongs to the NadD family.

The catalysed reaction is nicotinate beta-D-ribonucleotide + ATP + H(+) = deamido-NAD(+) + diphosphate. It participates in cofactor biosynthesis; NAD(+) biosynthesis; deamido-NAD(+) from nicotinate D-ribonucleotide: step 1/1. Functionally, catalyzes the reversible adenylation of nicotinate mononucleotide (NaMN) to nicotinic acid adenine dinucleotide (NaAD). This Shewanella frigidimarina (strain NCIMB 400) protein is Probable nicotinate-nucleotide adenylyltransferase.